The chain runs to 786 residues: Progesterone receptor (786 aa).

The span at 1–10 (MTEVKSKETR) shows a compositional bias: basic and acidic residues. 3 disordered regions span residues 1 to 95 (MTEV…SKDC), 110 to 212 (AAPW…ASPA), and 252 to 279 (SAFGPRSSPSVPAADLAEYGYPPPDGKE). A modulating, Pro-Rich region spans residues 1-420 (MTEVKSKETR…YSFESLPQKI (420 aa)). Lysine 7 is covalently cross-linked (Glycyl lysine isopeptide (Lys-Gly) (interchain with G-Cter in SUMO)). Residues 48–79 (DEEEEEEENEEEEEEEEPQQREEEEEEEEEDR) are compositionally biased toward acidic residues. Positions 143–154 (APGPSQPRPGAP) are enriched in pro residues. The segment covering 186-197 (AEERGFPERDAG) has biased composition (basic and acidic residues). Over residues 203–212 (LAPAAAASPA) the composition is skewed to low complexity. Residues serine 210 and serine 259 each carry the phosphoserine modification. Lysine 294 participates in a covalent cross-link: Glycyl lysine isopeptide (Lys-Gly) (interchain with G-Cter in SUMO); alternate. Residue lysine 294 forms a Glycyl lysine isopeptide (Lys-Gly) (interchain with G-Cter in ubiquitin); alternate linkage. Lysine 385 is covalently cross-linked (Glycyl lysine isopeptide (Lys-Gly) (interchain with G-Cter in SUMO)). NR C4-type zinc fingers lie at residues 421 to 441 (CLICGDEASGCHYGVLTCGSC) and 457 to 481 (CAGRNDCIVDKIRRKNCPACRLRKC). A DNA-binding region (nuclear receptor) is located at residues 421–486 (CLICGDEASG…RLRKCCQAGM (66 aa)). At serine 529 the chain carries Phosphoserine. An NR LBD domain is found at 532–766 (QEIPFVPPMI…EFPEMMSEVI (235 aa)).

The protein belongs to the nuclear hormone receptor family. NR3 subfamily. Phosphorylation of Ser-529 is sharply increased upon progesterone treatment, whereas phosphorylation of Ser-210 and Ser-259 is modestly induced by progesterone. In terms of processing, ubiquitinated. Ubiquitination is increased by progesterone and represses sumoylation at the same site. Post-translationally, sumoylation is hormone-dependent and represses transcriptional activity. Sumoylation on all three sites is enhanced by PIAS3. Desumoylated by SENP1. Sumoylation on Lys-385, the main site of sumoylation, is repressed by ubiquitination on the same site. Oviduct and bursa of Fabricius.

The protein localises to the nucleus. Its subcellular location is the cytoplasm. Its function is as follows. The steroid hormones and their receptors are involved in the regulation of eukaryotic gene expression and affect cellular proliferation and differentiation in target tissues. This Gallus gallus (Chicken) protein is Progesterone receptor (PGR).